Here is a 553-residue protein sequence, read N- to C-terminus: uncharacterized protein (553 aa).

5 consecutive transmembrane segments (helical) span residues 13–30 (ALQAVVVLSLISAIGLGL), 37–59 (GISLGVTFVFFAGILAGHFGLSI), 69–91 (SFGLIIFVYALGLQVGPGFFSSF), 98–120 (LNMLAIAVVILGTFLAVVCSYTT), and 157–179 (TPALGCAVAYPLGVIGVILAVLL). RCK C-terminal domains follow at residues 190 to 273 (LEVQ…LFGE) and 281 to 365 (KEDI…VLGN). A run of 6 helical transmembrane segments spans residues 375-397 (LVAVFVGIILGLALGAVPFSIPG), 402-424 (VRLGLAGGPIIVGILIGTFGPRL), 436-458 (LMLRALGLSLYLACLGLDAGAHF), 468-490 (LLWIGLGFGLTLVPTVLVGFFAF), 497-514 (FGSVSGMLCGSMANPMAL), and 529-551 (AYATVYPLSMFLRVIIAQVLLMF).

This sequence belongs to the AAE transporter (TC 2.A.81) family.

The protein localises to the cell membrane. This is an uncharacterized protein from Bacteroides fragilis (strain YCH46).